Consider the following 297-residue polypeptide: Beta-glucoside kinase (297 aa).

5-11 (AFDIGGT) is a binding site for ATP.

The protein belongs to the ROK (NagC/XylR) family. Homotetramer.

The enzyme catalyses D-cellobiose + ATP = 6-phospho-beta-D-glucosyl-(1-&gt;4)-D-glucose + ADP + H(+). With respect to regulation, is inhibited by N-ethylmaleimide in vitro, but ATP affords considerable protection against the inhibitor. In terms of biological role, catalyzes the ATP-dependent phosphorylation of a wide variety of beta-D-glucosides, to produce 6-phospho-beta-D-glucosides including cellobiose-6'-P, gentiobiose-6'-P, cellobiitol-6-P, salicin-6-P, and arbutin-6-P. Is not able to phosphorylate alpha-D-glucosides. May have a dual role of kinase and transcriptional regulator of the cellobiose-PTS operon. This chain is Beta-glucoside kinase (bglK), found in Klebsiella pneumoniae.